The primary structure comprises 253 residues: Ubiquinone/menaquinone biosynthesis C-methyltransferase UbiE (253 aa).

S-adenosyl-L-methionine contacts are provided by residues T76, D97, 125–126, and S142; that span reads NA.

Belongs to the class I-like SAM-binding methyltransferase superfamily. MenG/UbiE family.

It carries out the reaction a 2-demethylmenaquinol + S-adenosyl-L-methionine = a menaquinol + S-adenosyl-L-homocysteine + H(+). The catalysed reaction is a 2-methoxy-6-(all-trans-polyprenyl)benzene-1,4-diol + S-adenosyl-L-methionine = a 5-methoxy-2-methyl-3-(all-trans-polyprenyl)benzene-1,4-diol + S-adenosyl-L-homocysteine + H(+). It functions in the pathway quinol/quinone metabolism; menaquinone biosynthesis; menaquinol from 1,4-dihydroxy-2-naphthoate: step 2/2. Its pathway is cofactor biosynthesis; ubiquinone biosynthesis. In terms of biological role, methyltransferase required for the conversion of demethylmenaquinol (DMKH2) to menaquinol (MKH2) and the conversion of 2-polyprenyl-6-methoxy-1,4-benzoquinol (DDMQH2) to 2-polyprenyl-3-methyl-6-methoxy-1,4-benzoquinol (DMQH2). This Xanthomonas axonopodis pv. citri (strain 306) protein is Ubiquinone/menaquinone biosynthesis C-methyltransferase UbiE.